Reading from the N-terminus, the 158-residue chain is Phosphopantetheine adenylyltransferase (158 aa).

Position 10 (serine 10) interacts with substrate. ATP contacts are provided by residues 10–11 (SF) and histidine 18. Positions 42, 74, and 88 each coordinate substrate. Residues 89–91 (GLR), glutamate 99, and 124–130 (YANISSS) contribute to the ATP site.

This sequence belongs to the bacterial CoaD family. As to quaternary structure, homohexamer. The cofactor is Mg(2+).

The protein resides in the cytoplasm. It catalyses the reaction (R)-4'-phosphopantetheine + ATP + H(+) = 3'-dephospho-CoA + diphosphate. It participates in cofactor biosynthesis; coenzyme A biosynthesis; CoA from (R)-pantothenate: step 4/5. Reversibly transfers an adenylyl group from ATP to 4'-phosphopantetheine, yielding dephospho-CoA (dPCoA) and pyrophosphate. In Vesicomyosocius okutanii subsp. Calyptogena okutanii (strain HA), this protein is Phosphopantetheine adenylyltransferase.